Consider the following 475-residue polypeptide: Ankyrin repeat, SAM and basic leucine zipper domain-containing protein 1 (475 aa).

The segment at 1–25 (MAAGALRGLPVAGGGESSESEDDGW) is disordered. Phosphoserine occurs at positions 17, 18, and 20. ANK repeat units follow at residues 45–74 (EKKE…SVDS), 78–107 (YGWT…NASF), 110–144 (DKQS…DPNV), 148–177 (RLMT…EVNT), 181–210 (NGYT…NKML), and 214–243 (DGKM…PLEG). Residues 272–334 (SYTAFGDLEV…KILAALKELQ (63 aa)) form the SAM domain.

In terms of assembly, interacts with DDX4, PIWIL1, RANBP9 and TDRD1.

Its subcellular location is the cytoplasm. Functionally, plays a central role during spermatogenesis by repressing transposable elements and preventing their mobilization, which is essential for the germline integrity. Acts via the piRNA metabolic process, which mediates the repression of transposable elements during meiosis by forming complexes composed of piRNAs and Piwi proteins and governs the methylation and subsequent repression of transposons. Its association with pi-bodies suggests a participation in the primary piRNAs metabolic process. Required prior to the pachytene stage to facilitate the production of multiple types of piRNAs, including those associated with repeats involved in the regulation of retrotransposons. May act by mediating protein-protein interactions during germ cell maturation. The sequence is that of Ankyrin repeat, SAM and basic leucine zipper domain-containing protein 1 (ASZ1) from Pongo abelii (Sumatran orangutan).